Here is a 69-residue protein sequence, read N- to C-terminus: Conotoxin Lt5.7 (69 aa).

The signal sequence occupies residues 1–19 (MLCLPVFIILLLLASPAAP). Positions 20-54 (KSLETRIQNDLIRAGLTDADLKTEKGFLSGLLNVA) are excised as a propeptide.

It belongs to the conotoxin T superfamily. Contains 2 disulfide bonds that can be either 'C1-C3, C2-C4' or 'C1-C4, C2-C3', since these disulfide connectivities have been observed for conotoxins with cysteine framework V (for examples, see AC P0DQQ7 and AC P81755). As to expression, expressed by the venom duct.

The protein resides in the secreted. This chain is Conotoxin Lt5.7, found in Conus litteratus (Lettered cone).